Here is a 393-residue protein sequence, read N- to C-terminus: Xylose transport system permease protein XylH (393 aa).

Topologically, residues 1-24 (MSKSNPSEVKLAVPTSGGFSGLKS) are periplasmic. The chain crosses the membrane as a helical span at residues 25-45 (LNLQVFVMIAAIIAIMLFFTW). Topologically, residues 46-64 (TTDGAYLSARNVSNLLRQT) are cytoplasmic. The chain crosses the membrane as a helical span at residues 65 to 85 (AITGILAVGMVFVIISAEIDL). Residues 86-102 (SVGSMMGLLGGVAAICD) lie on the Periplasmic side of the membrane. The chain crosses the membrane as a helical span at residues 103–123 (VWLGWPLPLTIIVTLVLGLLL). At 124–135 (GAWNGWWVAYRK) the chain is on the cytoplasmic side. The helical transmembrane segment at 136 to 156 (VPSFIVTLAGMLAFRGILIGI) threads the bilayer. The Periplasmic segment spans residues 157 to 175 (TNGTTVSPTSAAMSQIGQS). A helical transmembrane segment spans residues 176–196 (YLPASTGFIIGALGLMAFVGW). Residues 197–214 (QWRGRMRRQALGLQSPAS) lie on the Cytoplasmic side of the membrane. Residues 215 to 235 (TAVVGRQALTAIIVLGAIWLL) traverse the membrane as a helical segment. The Periplasmic segment spans residues 236–239 (NDYR). Residues 240-260 (GVPTPVLLLTLLLLGGMFMAT) form a helical membrane-spanning segment. The Cytoplasmic portion of the chain corresponds to 261–287 (RTAFGRRIYAIGGNLEAARLSGINVER). Residues 288 to 308 (TKLAVFAINGLMVAIAGLILS) form a helical membrane-spanning segment. The Periplasmic portion of the chain corresponds to 309–312 (SRLG). Residues 313–333 (AGSPSAGNIAELDAIAACVIG) form a helical membrane-spanning segment. Residues 334–336 (GTS) lie on the Cytoplasmic side of the membrane. Residues 337 to 357 (LAGGVGSVAGAVMGAFIMASL) form a helical membrane-spanning segment. Topologically, residues 358-365 (DNGMSMMD) are periplasmic. The chain crosses the membrane as a helical span at residues 366 to 386 (VPTFWQYIVKGAILLLAVWMD). At 387-393 (SATKRRS) the chain is on the cytoplasmic side.

It belongs to the binding-protein-dependent transport system permease family. AraH/RbsC subfamily.

The protein resides in the cell inner membrane. Part of the binding-protein-dependent transport system for D-xylose. Probably responsible for the translocation of the substrate across the membrane. The polypeptide is Xylose transport system permease protein XylH (xylH) (Escherichia coli O6:H1 (strain CFT073 / ATCC 700928 / UPEC)).